Reading from the N-terminus, the 433-residue chain is Serine--tRNA ligase (433 aa).

L-serine is bound at residue Thr235–Glu237. An ATP-binding site is contributed by Arg266–Glu268. Glu289 contributes to the L-serine binding site. An ATP-binding site is contributed by Glu353–Ser356. L-serine is bound at residue Ser388.

It belongs to the class-II aminoacyl-tRNA synthetase family. Type-1 seryl-tRNA synthetase subfamily. In terms of assembly, homodimer. The tRNA molecule binds across the dimer.

The protein localises to the cytoplasm. It catalyses the reaction tRNA(Ser) + L-serine + ATP = L-seryl-tRNA(Ser) + AMP + diphosphate + H(+). It carries out the reaction tRNA(Sec) + L-serine + ATP = L-seryl-tRNA(Sec) + AMP + diphosphate + H(+). It participates in aminoacyl-tRNA biosynthesis; selenocysteinyl-tRNA(Sec) biosynthesis; L-seryl-tRNA(Sec) from L-serine and tRNA(Sec): step 1/1. Functionally, catalyzes the attachment of serine to tRNA(Ser). Is also able to aminoacylate tRNA(Sec) with serine, to form the misacylated tRNA L-seryl-tRNA(Sec), which will be further converted into selenocysteinyl-tRNA(Sec). The protein is Serine--tRNA ligase of Burkholderia lata (strain ATCC 17760 / DSM 23089 / LMG 22485 / NCIMB 9086 / R18194 / 383).